We begin with the raw amino-acid sequence, 182 residues long: Adenylate kinase (182 aa).

An ATP-binding site is contributed by 12–17 (GAGKGT). Residues 32–61 (STGDLLRTEVGAKTPLGQEAAAVMNRGELV) are NMP. Residues Thr-33, Arg-38, 59–61 (ELV), 85–88 (GFPR), and Gln-92 contribute to the AMP site. Residues 126-132 (SRGRSDD) form an LID region. Arg-127 contributes to the ATP binding site. AMP contacts are provided by Arg-129 and Arg-140. Gly-168 provides a ligand contact to ATP.

Belongs to the adenylate kinase family. As to quaternary structure, monomer.

Its subcellular location is the cytoplasm. It carries out the reaction AMP + ATP = 2 ADP. Its pathway is purine metabolism; AMP biosynthesis via salvage pathway; AMP from ADP: step 1/1. Functionally, catalyzes the reversible transfer of the terminal phosphate group between ATP and AMP. Plays an important role in cellular energy homeostasis and in adenine nucleotide metabolism. This Prochlorococcus marinus (strain MIT 9313) protein is Adenylate kinase.